Reading from the N-terminus, the 256-residue chain is Imidazole glycerol phosphate synthase subunit HisF (256 aa).

Active-site residues include D12 and D131.

The protein belongs to the HisA/HisF family. As to quaternary structure, heterodimer of HisH and HisF.

It localises to the cytoplasm. It catalyses the reaction 5-[(5-phospho-1-deoxy-D-ribulos-1-ylimino)methylamino]-1-(5-phospho-beta-D-ribosyl)imidazole-4-carboxamide + L-glutamine = D-erythro-1-(imidazol-4-yl)glycerol 3-phosphate + 5-amino-1-(5-phospho-beta-D-ribosyl)imidazole-4-carboxamide + L-glutamate + H(+). Its pathway is amino-acid biosynthesis; L-histidine biosynthesis; L-histidine from 5-phospho-alpha-D-ribose 1-diphosphate: step 5/9. IGPS catalyzes the conversion of PRFAR and glutamine to IGP, AICAR and glutamate. The HisF subunit catalyzes the cyclization activity that produces IGP and AICAR from PRFAR using the ammonia provided by the HisH subunit. This chain is Imidazole glycerol phosphate synthase subunit HisF, found in Bifidobacterium longum (strain DJO10A).